A 342-amino-acid polypeptide reads, in one-letter code: Phosphate acyltransferase (342 aa).

This sequence belongs to the PlsX family. As to quaternary structure, homodimer. Probably interacts with PlsY.

The protein localises to the cytoplasm. The enzyme catalyses a fatty acyl-[ACP] + phosphate = an acyl phosphate + holo-[ACP]. It participates in lipid metabolism; phospholipid metabolism. Functionally, catalyzes the reversible formation of acyl-phosphate (acyl-PO(4)) from acyl-[acyl-carrier-protein] (acyl-ACP). This enzyme utilizes acyl-ACP as fatty acyl donor, but not acyl-CoA. This chain is Phosphate acyltransferase, found in Actinobacillus succinogenes (strain ATCC 55618 / DSM 22257 / CCUG 43843 / 130Z).